Consider the following 185-residue polypeptide: MGKYAKNARNPAKSCRARGSNLRVHFKNTRETAKTIKRMPLRRAIQFLKNVQDKQECVPFRRFNGGVGRCAQAKQWGTTQGRWPIKSAQFLLELLRNAESNAEFKGLDSDRLFIEHIQVNRAPCLRRRTYRAHGRINPYMSSPCHIEVILTEKQKYVGKVSHDDSQKKKVSKKKLARQKEKMMRE.

The segment at 160 to 185 (VSHDDSQKKKVSKKKLARQKEKMMRE) is disordered.

It belongs to the universal ribosomal protein uL22 family.

The polypeptide is Large ribosomal subunit protein uL22 (RpL17) (Maconellicoccus hirsutus (Pink hibiscus mealybug)).